The following is a 419-amino-acid chain: Delta(8)-fatty-acid desaturase (419 aa).

A Cytochrome b5 heme-binding domain is found at 1–64 (MKSKRQALSP…LKRMPKINPS (64 aa)). The heme site is built by His24 and His47. A helical transmembrane segment spans residues 110-130 (LGVLGYFLMVQYQMYFIGAVL). A Histidine box-1 motif is present at residues 143-147 (HDICH). Residues 156-176 (WNNLVGLVFGNGLQGFSVTCW) form a helical membrane-spanning segment. The Histidine box-2 motif lies at 180–184 (HNAHH). The next 3 membrane-spanning stretches (helical) occupy residues 226–246 (YFLV…VLTV), 266–286 (IGLA…MPSI), and 290–310 (LLVF…VVFM). The short motif at 355–359 (QIEHH) is the Histidine box-3 element.

This sequence belongs to the fatty acid desaturase type 1 family. Requires Fe cation as cofactor.

It localises to the membrane. It carries out the reaction an (11Z,14Z)-icosadienoyl-containing glycerolipid + 2 Fe(II)-[cytochrome b5] + O2 + 2 H(+) = an (8Z,11Z,14Z)-icosatrienoyl-containing glycerolipid + 2 Fe(III)-[cytochrome b5] + 2 H2O. The catalysed reaction is an (11Z,14Z,17Z)-icosatrienoyl-containing glycerolipid + 2 Fe(II)-[cytochrome b5] + O2 + 2 H(+) = an (8Z,11Z,14Z,17Z)-eicosatetraenoyl-containing glycerolipid + 2 Fe(III)-[cytochrome b5] + 2 H2O. It catalyses the reaction an (11Z)-eicosenoyl-containing glycerolipid + 2 Fe(II)-[cytochrome b5] + O2 + 2 H(+) = a (8Z,11Z)-eicosadienoyl-containing glycerolipid + 2 Fe(III)-[cytochrome b5] + 2 H2O. Its pathway is lipid metabolism; fatty acid metabolism. In terms of biological role, delta(8)-fatty-acid desaturase which introduces a double bond at the 8-position in 20-carbon chain length fatty acids (C20) that have an existing delta-11 unsaturation (double bond). Whether it acts on CoA-linked substrates (as in animals) or phospholipid-linked substrates (as in plants and fungi) is still not clear. The polypeptide is Delta(8)-fatty-acid desaturase (efd1) (Euglena gracilis).